We begin with the raw amino-acid sequence, 1987 residues long: Transcriptional activator DEMETER (1987 aa).

Disordered stretches follow at residues 246–378 (TGHE…NKSP), 392–415 (DLENPGDARQGDSESEIVQNSSGA), and 793–901 (MPPE…GPSG). A compositionally biased stretch (polar residues) spans 258–277 (SMQSIMDSSAVNATEATEQN). The span at 341–364 (ATQEKVKSKETGSAKKKNLKESAT) shows a compositional bias: basic and acidic residues. Positions 813–829 (NTASISKGASKGNSSPV) are enriched in polar residues. A compositionally biased stretch (basic residues) spans 844-855 (PAKKGRAGRKKS). The interval 955–1054 (KVDIDDETTR…AFMSLAARFP (100 aa)) is DEMETER. 2 disordered regions span residues 1324–1351 (LPGMGLSGSSSAVQEHQDDTQHNQQDEM) and 1439–1471 (TLADGKKPTSQWDSLRKDVEGNEGRQERNKNNM). Composition is skewed to basic and acidic residues over residues 1338–1351 (EHQDDTQHNQQDEM) and 1452–1469 (SLRKDVEGNEGRQERNKN). Positions 1629, 1636, 1639, and 1645 each coordinate [4Fe-4S] cluster.

The protein belongs to the DNA glycosylase family. DEMETER subfamily. [4Fe-4S] cluster serves as cofactor. Mainly expressed in immature flower buds, then decreases as the flower matures. Expressed in the ovule carpels, but not expressed in pollen stamens. Expressed in developing and mature ovules (stages 12-14), then strongly decreases after fertilization.

The protein resides in the nucleus. Its function is as follows. Transcriptional activator involved in gene imprinting. Catalyzes the release of 5-methylcytosine (5-meC) from DNA by a glycosylase/lyase mechanism. Allows the expression of the maternal copy of the imprinted MEA gene before fertilization, possibly by antagonizing or suppressing DNA methylation on target promoter. Probably acts by nicking the MEA promoter. Required for stable reproducible patterns of floral and vegetative development. This Arabidopsis thaliana (Mouse-ear cress) protein is Transcriptional activator DEMETER (DME).